The chain runs to 314 residues: Lipoyl synthase (314 aa).

[4Fe-4S] cluster contacts are provided by Cys55, Cys60, Cys66, Cys81, Cys85, Cys88, and Ser292. Positions 67-281 constitute a Radical SAM core domain; that stretch reads WEDREATFLI…SAYAEGLGFA (215 aa).

It belongs to the radical SAM superfamily. Lipoyl synthase family. [4Fe-4S] cluster serves as cofactor.

It localises to the cytoplasm. The enzyme catalyses [[Fe-S] cluster scaffold protein carrying a second [4Fe-4S](2+) cluster] + N(6)-octanoyl-L-lysyl-[protein] + 2 oxidized [2Fe-2S]-[ferredoxin] + 2 S-adenosyl-L-methionine + 4 H(+) = [[Fe-S] cluster scaffold protein] + N(6)-[(R)-dihydrolipoyl]-L-lysyl-[protein] + 4 Fe(3+) + 2 hydrogen sulfide + 2 5'-deoxyadenosine + 2 L-methionine + 2 reduced [2Fe-2S]-[ferredoxin]. Its pathway is protein modification; protein lipoylation via endogenous pathway; protein N(6)-(lipoyl)lysine from octanoyl-[acyl-carrier-protein]: step 2/2. In terms of biological role, catalyzes the radical-mediated insertion of two sulfur atoms into the C-6 and C-8 positions of the octanoyl moiety bound to the lipoyl domains of lipoate-dependent enzymes, thereby converting the octanoylated domains into lipoylated derivatives. This chain is Lipoyl synthase, found in Mycolicibacterium smegmatis (strain ATCC 700084 / mc(2)155) (Mycobacterium smegmatis).